We begin with the raw amino-acid sequence, 137 residues long: Large ribosomal subunit protein uL16 (137 aa).

The protein belongs to the universal ribosomal protein uL16 family. In terms of assembly, part of the 50S ribosomal subunit.

Functionally, binds 23S rRNA and is also seen to make contacts with the A and possibly P site tRNAs. This chain is Large ribosomal subunit protein uL16, found in Wolbachia sp. subsp. Brugia malayi (strain TRS).